Reading from the N-terminus, the 113-residue chain is MKFMEIEKTNRMNALFEFYAALLTDKQMNYIELYYADDYSLAEIAEEFQVSRQAVYDNIKRTEKLLEDYEMKLHMYSDYVVRSQIFDEILNKYPEDAYLKEKIAILTSIDNRE.

The protein belongs to the UPF0122 family.

Might take part in the signal recognition particle (SRP) pathway. This is inferred from the conservation of its genetic proximity to ftsY/ffh. May be a regulatory protein. This is UPF0122 protein SSU98_0878 from Streptococcus suis (strain 98HAH33).